Consider the following 432-residue polypeptide: Guanine nucleotide-binding protein subunit alpha (432 aa).

The segment at 1-97 is disordered; sequence MGGCMSTPEA…SKGNKDRSNQ (97 aa). Gly-2 carries N-myristoyl glycine lipidation. Cys-4 carries the S-palmitoyl cysteine lipid modification. Residues 21-52 are compositionally biased toward low complexity; it reads PSTSTSSRPPQASTSATATAAGAGTSAANGTA. The 322-residue stretch at 111–432 folds into the G-alpha domain; it reads KECKILLLGS…QNALRDSGIL (322 aa). Residues 114-127 are G1 motif; the sequence is KILLLGSGESGKST. Positions 122, 123, 124, 125, 126, 127, 230, 255, 261, 283, 349, 350, 352, and 404 each coordinate GTP. Residue Ser-126 coordinates Mg(2+). The segment at 253–261 is G2 motif; the sequence is DVLRARTKT. Residue Thr-261 coordinates Mg(2+). The segment at 276–285 is G3 motif; that stretch reads IHMFDVGGQR. The tract at residues 345–352 is G4 motif; that stretch reads ILFLNKID. Residues 402-407 are G5 motif; the sequence is TQATDT.

The protein belongs to the G-alpha family. As to quaternary structure, g proteins are composed of 3 units; alpha, beta and gamma. The alpha chain contains the guanine nucleotide binding site. Requires Mg(2+) as cofactor.

Functionally, guanine nucleotide-binding proteins (G proteins) are involved as modulators or transducers in various transmembrane signaling systems. Involved in the mating pathway. This Cryptococcus neoformans var. neoformans serotype D (strain B-3501A) (Filobasidiella neoformans) protein is Guanine nucleotide-binding protein subunit alpha (GPA1).